Here is a 28-residue protein sequence, read N- to C-terminus: Palustrin-1a (28 aa).

The cysteines at positions 22 and 28 are disulfide-linked.

Expressed by the skin glands.

The protein localises to the secreted. Antimicrobial activity against Gram-negative bacterium E.coli. This is Palustrin-1a from Lithobates palustris (Pickerel frog).